We begin with the raw amino-acid sequence, 306 residues long: Homoserine kinase (306 aa).

Proline 88–threonine 98 contributes to the ATP binding site.

This sequence belongs to the GHMP kinase family. Homoserine kinase subfamily.

The protein resides in the cytoplasm. The enzyme catalyses L-homoserine + ATP = O-phospho-L-homoserine + ADP + H(+). The protein operates within amino-acid biosynthesis; L-threonine biosynthesis; L-threonine from L-aspartate: step 4/5. Functionally, catalyzes the ATP-dependent phosphorylation of L-homoserine to L-homoserine phosphate. The chain is Homoserine kinase from Synechococcus sp. (strain ATCC 27144 / PCC 6301 / SAUG 1402/1) (Anacystis nidulans).